The following is a 283-amino-acid chain: N-terminal Xaa-Pro-Lys N-methyltransferase 2 (283 aa).

S-adenosyl-L-methionine-binding positions include G124, R129, D146, 174–175 (LQ), and Q190.

This sequence belongs to the methyltransferase superfamily. NTM1 family.

Its subcellular location is the nucleus. It catalyses the reaction N-terminal L-alanyl-L-prolyl-L-lysyl-[protein] + S-adenosyl-L-methionine = N-terminal N-methyl-L-alanyl-L-prolyl-L-lysyl-[protein] + S-adenosyl-L-homocysteine + H(+). The enzyme catalyses N-terminal L-prolyl-L-prolyl-L-lysyl-[protein] + S-adenosyl-L-methionine = N-terminal N-methyl-L-prolyl-L-prolyl-L-lysyl-[protein] + S-adenosyl-L-homocysteine + H(+). The catalysed reaction is N-terminal L-seryl-L-prolyl-L-lysyl-[protein] + S-adenosyl-L-methionine = N-terminal N-methyl-L-seryl-L-prolyl-L-lysyl-[protein] + S-adenosyl-L-homocysteine + H(+). Functionally, alpha N-methyltransferase that methylates the N-terminus of target proteins containing the N-terminal motif [Ala/Pro/Ser]-Pro-Lys when the initiator Met is cleaved. Specifically catalyzes monomethylation of exposed alpha-amino group of Ala or Ser residue in the [Ala/Ser]-Pro-Lys motif and Pro in the Pro-Pro-Lys motif. Predominantly functions as a mono-methyltransferase but is also able to di-/tri-methylate the GPKRIA peptide and di-methylate the PPKRIA peptide (in vitro). May activate NTMT1 by priming its substrates for trimethylation. This is N-terminal Xaa-Pro-Lys N-methyltransferase 2 (Ntmt2) from Rattus norvegicus (Rat).